Consider the following 226-residue polypeptide: Ribonuclease 3 (226 aa).

The RNase III domain maps to I6–D128. Position 41 (E41) interacts with Mg(2+). D45 is a catalytic residue. Positions 114 and 117 each coordinate Mg(2+). E117 is an active-site residue. One can recognise a DRBM domain in the interval D155–L225.

The protein belongs to the ribonuclease III family. As to quaternary structure, homodimer. The cofactor is Mg(2+).

It localises to the cytoplasm. It carries out the reaction Endonucleolytic cleavage to 5'-phosphomonoester.. In terms of biological role, digests double-stranded RNA. Involved in the processing of primary rRNA transcript to yield the immediate precursors to the large and small rRNAs (23S and 16S). Processes some mRNAs, and tRNAs when they are encoded in the rRNA operon. Processes pre-crRNA and tracrRNA of type II CRISPR loci if present in the organism. This Klebsiella pneumoniae (strain 342) protein is Ribonuclease 3.